Consider the following 596-residue polypeptide: Glomulin (596 aa).

At A2 the chain carries N-acetylalanine. Residues 2 to 555 (AVEELQSIIK…EEIPSMPPEM (554 aa)) form an alpha-helical region with structural similarity to HEAT repeats region. An important for interaction with RBX1 region spans residues 299 to 596 (IDQLPMVLSP…STSEENVGIK (298 aa)).

As to quaternary structure, interacts with FKBP4 and FKBP1A. Interacts with RBX1 (via RING domain). Identified in complexes that contain RBX1 plus one of the cullins CUL1, CUL2, CUL3, and CUL4A. Identified in a SCF complex composed of CUL1, RBX1, SKP1, FBXW7 and GLMN. Component of a SCF-like complex consisting of CUL7, RBX1, SKP1, FBXW8 and GLMN. Interacts with unphosphorylated MET and is released upon MET phosphorylation. Phosphorylated on tyrosine residues. In terms of tissue distribution, ubiquitous. Detected in embryonic vasculature and embryonic perichondrium, and in adult eye, brain, heart, testis, kidney, smooth muscle and skeletal muscle.

In terms of biological role, regulatory component of cullin-RING-based SCF (SKP1-Cullin-F-box protein) E3 ubiquitin-protein ligase complexes. Inhibits E3 ubiquitin ligase activity by binding to the RING domain of RBX1 and inhibiting its interaction with the E2 ubiquitin-conjugating enzyme CDC34. Inhibits RBX1-mediated neddylation of CUL1. Required for normal stability and normal cellular levels of key components of SCF ubiquitin ligase complexes, including FBXW7, RBX1, CUL1, CUL2, CUL3, CUL4A, and thereby contributes to the regulation of CCNE1 and MYC levels. Essential for normal development of the vasculature. Contributes to the regulation of RPS6KB1 phosphorylation. The protein is Glomulin (Glmn) of Mus musculus (Mouse).